The sequence spans 75 residues: Small capsomere-interacting protein (75 aa).

Belongs to the herpesviridae small capsomere-interacting protein family. Interacts with the major capsid protein/MCP.

The protein localises to the virion. It is found in the host nucleus. Functionally, participates in the assembly of the infectious particles by decorating the outer surface of the capsid shell and thus forming a layer between the capsid and the tegument. Complexes composed of the major capsid protein and small capsomere-interacting protein/SCP assemble together in the host cytoplasm and are translocated to the nucleus, where they accumulate and participate in capsid assembly. The chain is Small capsomere-interacting protein from Homo sapiens (Human).